Reading from the N-terminus, the 373-residue chain is Peptidoglycan recognition protein 4 (373 aa).

A signal peptide spans 1-17 (MLPWLLVFSALGIQAWG). N-linked (GlcNAc...) asparagine glycans are attached at residues Asn22, Asn39, Asn109, Asn145, and Asn247. 2 consecutive N-acetylmuramoyl-L-alanine amidase domains span residues 74 to 212 (TPVN…ACPG) and 235 to 358 (YGII…LSPG). 3 disulfides stabilise this stretch: Cys210–Cys332, Cys226–Cys270, and Cys246–Cys252. 2 residues coordinate peptidoglycan: Tyr263 and Tyr274. Interaction with murein regions lie at residues 293 to 302 (QGSSTPGYDD) and 353 to 354 (RT).

This sequence belongs to the N-acetylmuramoyl-L-alanine amidase 2 family. As to quaternary structure, homodimer; disulfide-linked. Heterodimer with PGLYRP3; disulfide-linked. N-glycosylated. In terms of tissue distribution, detected in skin epidermis, eccrine sweat glands and ducts, mucous cells in the submandibular salivary gland, mucous cells in the throat, ciliary body epithelial cells of the eye, small intestine, colon, stomach and in mature epithelial cells of the tongue (at protein level). High expression in skin and esophagus. Expressed also to a much lesser extent in the tonsils and thymus.

The protein localises to the secreted. Its function is as follows. Pattern receptor that binds to murein peptidoglycans (PGN) of Gram-positive bacteria. Has bactericidal activity towards Gram-positive bacteria. May kill Gram-positive bacteria by interfering with peptidoglycan biosynthesis. Also binds to Gram-negative bacteria, and has bacteriostatic activity towards Gram-negative bacteria. Plays a role in innate immunity. The chain is Peptidoglycan recognition protein 4 (PGLYRP4) from Homo sapiens (Human).